Here is a 308-residue protein sequence, read N- to C-terminus: Ectoine dioxygenase (308 aa).

Q131 serves as a coordination point for L-ectoine. Residue K137 coordinates 2-oxoglutarate. Residues H148, D150, and H249 each coordinate Fe cation.

This sequence belongs to the PhyH family. EctD subfamily. In terms of assembly, homodimer. The cofactor is Fe(2+).

The catalysed reaction is L-ectoine + 2-oxoglutarate + O2 = 5-hydroxyectoine + succinate + CO2. Involved in the biosynthesis of 5-hydroxyectoine, called compatible solute, which helps organisms to survive extreme osmotic stress by acting as a highly soluble organic osmolyte. Catalyzes the 2-oxoglutarate-dependent selective hydroxylation of L-ectoine to yield (4S,5S)-5-hydroxyectoine. The polypeptide is Ectoine dioxygenase (Bordetella bronchiseptica (strain ATCC BAA-588 / NCTC 13252 / RB50) (Alcaligenes bronchisepticus)).